Consider the following 423-residue polypeptide: Testin (423 aa).

Disordered regions lie at residues 1–21 and 138–169; these read MSAT…ACAS and EKQP…PSKC. A PET domain is found at 97–204; that stretch reads MILTNPVAAK…GDVKFPSEMN (108 aa). A compositionally biased stretch (basic and acidic residues) spans 160 to 169; sequence PAHDQDPSKC. LIM zinc-binding domains follow at residues 236 to 299, 301 to 361, and 364 to 423; these read YSCY…CDSE, PRCA…NHAV, and QGCH…RMMS.

Belongs to the prickle / espinas / testin family. As to quaternary structure, interacts via LIM domain 1 with ZYX. Interacts (via LIM domain 3) with ENAH and VASP. Interacts with ALKBH4, talin, actin, alpha-actinin, GRIP1 and PXN. Interacts (via LIM domain 2) with ACTL7A (via N-terminus). Heterodimer with ACTL7A; the heterodimer interacts with ENAH to form a heterotrimer. Detected at the acrosome of round spermatids (at protein level). Isoform TES1 transcript is highly expressed in adult testis and detected at low levels in other tissues. Isoform TES2 transcript is highly expressed in testis, kidney and spleen; intermediate in thymus, submaxillary gland and lung; detected at low levels in other tissues.

It is found in the cytoplasm. The protein localises to the cell junction. It localises to the focal adhesion. Functionally, scaffold protein that may play a role in cell adhesion, cell spreading and in the reorganization of the actin cytoskeleton. Plays a role in the regulation of cell proliferation. May act as a tumor suppressor. The sequence is that of Testin (Tes) from Mus musculus (Mouse).